The sequence spans 83 residues: Hainantoxin-III 11 (83 aa).

The signal sequence occupies residues Met-1–Ala-21. Residues Ser-22–Arg-48 constitute a propeptide that is removed on maturation. 3 disulfides stabilise this stretch: Cys-50–Cys-65, Cys-57–Cys-70, and Cys-64–Cys-77. Leu-81 is modified (leucine amide).

Belongs to the neurotoxin 10 (Hwtx-1) family. 15 (Hntx-3) subfamily. As to quaternary structure, monomer. As to expression, expressed by the venom gland.

It is found in the secreted. In terms of biological role, selective antagonist of neuronal tetrodotoxin (TTX)-sensitive voltage-gated sodium channels (IC(50)=1270 nM on Nav1.1/SCN1A, 270 nM on Nav1.2/SCN2A, 491 nM on Nav1.3/SCN3A and 232 nM on Nav1.7/SCN9A). This toxin suppress Nav1.7 current amplitude without significantly altering the activation, inactivation, and repriming kinetics. Short extreme depolarizations partially activate the toxin-bound channel, indicating voltage-dependent inhibition of this toxin. This toxin increases the deactivation of the Nav1.7 current after extreme depolarizations. The toxin-Nav1.7 complex is gradually dissociated upon prolonged strong depolarizations in a voltage-dependent manner, and the unbound toxin rebinds to Nav1.7 after a long repolarization. Moreover, analysis of chimeric channels showed that the DIIS3-S4 linker is critical for toxin binding to Nav1.7. These data are consistent with this toxin interacting with Nav1.7 site 4 and trapping the domain II voltage sensor in the closed state. This Cyriopagopus hainanus (Chinese bird spider) protein is Hainantoxin-III 11.